The sequence spans 470 residues: 1-aminocyclopropane-1-carboxylate synthase 5 (470 aa).

2 residues coordinate substrate: Glu47 and Tyr85. Lys272 carries the post-translational modification N6-(pyridoxal phosphate)lysine. At Ser461 the chain carries Phosphoserine.

It belongs to the class-I pyridoxal-phosphate-dependent aminotransferase family. In terms of assembly, homodimer and heterodimer. In vivo, the relevance of heterodimerization with other ACS enzymes is however unsure. Interacts (via its C-terminal region) with FEI1, FEI2, ETO1, EOL1 and EOL2. Interacts with GRF3. It depends on pyridoxal 5'-phosphate as a cofactor. May be processed at its C-terminus. Post-translationally, ubiquitinated. The interaction with ETO1 (and possibly EOL1 and EOL2) mediate its proteasome-dependent degradation. Its stability and degradation plays a central role in ethylene biosynthesis. In terms of tissue distribution, expressed in roots and siliques.

The catalysed reaction is S-adenosyl-L-methionine = 1-aminocyclopropane-1-carboxylate + S-methyl-5'-thioadenosine + H(+). Its pathway is alkene biosynthesis; ethylene biosynthesis via S-adenosyl-L-methionine; ethylene from S-adenosyl-L-methionine: step 1/2. In terms of biological role, 1-aminocyclopropane-1-carboxylate synthase (ACS) enzymes catalyze the conversion of S-adenosyl-L-methionine (SAM) into 1-aminocyclopropane-1-carboxylate (ACC), a direct precursor of ethylene. The chain is 1-aminocyclopropane-1-carboxylate synthase 5 (ACS5) from Arabidopsis thaliana (Mouse-ear cress).